The primary structure comprises 444 residues: Acyl-CoA (8-3)-desaturase (444 aa).

Position 1 is an N-acetylmethionine (methionine 1). The Cytoplasmic segment spans residues 1-121 (MAPDPVAAKT…FRELRATVEQ (121 aa)). The Cytochrome b5 heme-binding domain maps to 17–94 (PRYFTWDEVA…MNSLLIGELS (78 aa)). The helical transmembrane segment at 122–142 (MGLMKANHVFFLLYLLHILLL) threads the bilayer. The Lumenal portion of the chain corresponds to 143–146 (DGAA). Residues 147 to 167 (WLTLWIFGTSFLPFLLCAVLL) form a helical membrane-spanning segment. The Cytoplasmic segment spans residues 168–267 (TAAQIQAGWL…PYNHQHKYFF (100 aa)). A Histidine box-1 motif is present at residues 179–183 (HDLGH). The Histidine box-2 motif lies at 216–220 (HFQHH). Residues 268–288 (LIGPPALVPFFFQWYVFYFVI) traverse the membrane as a helical segment. Topologically, residues 289–305 (QRKKWVDLAWMITFYIR) are lumenal. A helical membrane pass occupies residues 306 to 326 (LLLTYVPLLGLKAFLGLYFIV). Topologically, residues 327-444 (RFLESNWFVW…QLWLDAYLHQ (118 aa)) are cytoplasmic. Residues 382–386 (QIEHH) carry the Histidine box-3 motif.

This sequence belongs to the fatty acid desaturase type 1 family. In terms of tissue distribution, widely expressed. Expressed in brain, liver and thymus (at protein level). Isoform 1 seems to be more abundant than isoform 2. Expression of isoform 2 is very low in spleen and not detectable in skeletal muscle.

It is found in the endoplasmic reticulum membrane. Its subcellular location is the mitochondrion. It carries out the reaction (8Z,11Z,14Z)-eicosatrienoyl-CoA + 2 Fe(II)-[cytochrome b5] + O2 + 2 H(+) = (5Z,8Z,11Z,14Z)-eicosatetraenoyl-CoA + 2 Fe(III)-[cytochrome b5] + 2 H2O. The catalysed reaction is (8Z,11Z,14Z,17Z)-eicosatetraenoyl-CoA + 2 Fe(II)-[cytochrome b5] + O2 + 2 H(+) = (5Z,8Z,11Z,14Z,17Z)-eicosapentaenoyl-CoA + 2 Fe(III)-[cytochrome b5] + 2 H2O. The enzyme catalyses (11E)-octadecenoyl-CoA + 2 Fe(II)-[cytochrome b5] + O2 + 2 H(+) = (5Z,11E)-octadecadienoyl-CoA + 2 Fe(III)-[cytochrome b5] + 2 H2O. It participates in lipid metabolism; polyunsaturated fatty acid biosynthesis. Acts as a front-end fatty acyl-coenzyme A (CoA) desaturase that introduces a cis double bond at carbon 5 located between a preexisting double bond and the carboxyl end of the fatty acyl chain. Involved in biosynthesis of highly unsaturated fatty acids (HUFA) from the essential polyunsaturated fatty acids (PUFA) linoleic acid (LA) (18:2n-6) and alpha-linolenic acid (ALA) (18:3n-3) precursors. Specifically, desaturates dihomo-gamma-linoleoate (DGLA) (20:3n-6) and eicosatetraenoate (ETA) (20:4n-3) to generate arachidonate (AA) (20:4n-6) and eicosapentaenoate (EPA) (20:5n-3), respectively. As a rate limiting enzyme for DGLA (20:3n-6) and AA (20:4n-6)-derived eicosanoid biosynthesis, controls the metabolism of inflammatory lipids like prostaglandin E2, critical for efficient acute inflammatory response and maintenance of epithelium homeostasis. Contributes to membrane phospholipid biosynthesis by providing AA (20:4n-6) as a major acyl chain esterified into phospholipids. In particular, regulates phosphatidylinositol-4,5-bisphosphate levels, modulating inflammatory cytokine production in T-cells. Also desaturates (11E)-octadecenoate (trans-vaccenoate)(18:1n-9), a metabolite in the biohydrogenation pathway of LA (18:2n-6). Its function is as follows. Does not exhibit any catalytic activity toward 20:3n-6, but it may enhance FADS2 activity. This is Acyl-CoA (8-3)-desaturase from Papio anubis (Olive baboon).